A 776-amino-acid chain; its full sequence is Ent-8-alpha-hydroxylabd-13-en-15-yl diphosphate synthase CPS4, chloroplastic (776 aa).

The N-terminal 60 residues, 1–60, are a transit peptide targeting the chloroplast; that stretch reads MSFASNATGFRIPLTTCVYPSPILRFNAKVGSGSSYGTTEAQRNMKCVDGIGRSRVVAVA. A substrate-binding site is contributed by lysine 226. Positions 357 and 359 each coordinate Mg(2+). A DXDD motif motif is present at residues 357–360; that stretch reads DSDD. Residue lysine 443 participates in substrate binding.

This sequence belongs to the terpene synthase family. Mg(2+) is required as a cofactor.

It is found in the plastid. The protein resides in the chloroplast. The enzyme catalyses ent-8alpha-hydroxylabd-13-en-15-yl diphosphate = (2E,6E,10E)-geranylgeranyl diphosphate + H2O. It functions in the pathway secondary metabolite biosynthesis; terpenoid biosynthesis. Involved in diterpenoid biosynthesis. Catalyzes the conversion of all-trans-geranylgeranyl diphosphate to ent-8alpha-hydroxylabd-13-en-15-yl diphosphate. The protein is Ent-8-alpha-hydroxylabd-13-en-15-yl diphosphate synthase CPS4, chloroplastic of Salvia miltiorrhiza (Chinese sage).